We begin with the raw amino-acid sequence, 78 residues long: Small ribosomal subunit protein bS18B (78 aa).

The disordered stretch occupies residues 1–22 (MPRKPVRKVASTPRPNPLDQNG).

This sequence belongs to the bacterial ribosomal protein bS18 family. Part of the 30S ribosomal subunit. Forms a tight heterodimer with protein bS6.

In terms of biological role, binds as a heterodimer with protein bS6 to the central domain of the 16S rRNA, where it helps stabilize the platform of the 30S subunit. This Streptomyces avermitilis (strain ATCC 31267 / DSM 46492 / JCM 5070 / NBRC 14893 / NCIMB 12804 / NRRL 8165 / MA-4680) protein is Small ribosomal subunit protein bS18B.